Here is a 470-residue protein sequence, read N- to C-terminus: E3 SUMO-protein ligase EGR2 (470 aa).

Residues 126-141 (PPASTTASSSVTSASP) are compositionally biased toward low complexity. Disordered regions lie at residues 126-153 (PPAS…GVCT), 159-178 (PELD…SGCT), and 184-211 (DPSA…YPSP). The residue at position 247 (K247) is an N6-acetyllysine; by EP300. Residues 275 to 344 (GPSAGVTGPG…RPYPCPAEGC (70 aa)) form a disordered region. Residues 281 to 291 (TGPGASGGGEG) show a composition bias toward gly residues. C2H2-type zinc fingers lie at residues 337 to 361 (YPCP…IRIH), 367 to 389 (FQCR…IRTH), and 395 to 417 (FACD…TKIH). Residues 408–470 (DERKRHTKIH…ASCTSRTRTP (63 aa)) are disordered. Basic residues predominate over residues 412–422 (RHTKIHLRQKE). The span at 426 to 439 (SAPSSSASAQSSAS) shows a compositional bias: low complexity. Residues 440–450 (GPGGSQAGGSL) show a composition bias toward gly residues.

Belongs to the EGR C2H2-type zinc-finger protein family. Interacts with HCFC1. Interacts with WWP2. Interacts with UBC9. Interacts with CITED1. Interacts (via phosphorylated form) with SFN. In terms of processing, ubiquitinated by WWP2 leading to proteasomal degradation. Acetylated at Lys-247. May be deacetylated by HDAC6, HDAC10 or SIRT1.

Its subcellular location is the nucleus. The protein operates within protein modification; protein sumoylation. In terms of biological role, sequence-specific DNA-binding transcription factor. Plays a role in hindbrain segmentation by regulating the expression of a subset of homeobox containing genes and in Schwann cell myelination by regulating the expression of genes involved in the formation and maintenance of myelin. Binds to two EGR2-consensus sites EGR2A (5'-CTGTAGGAG-3') and EGR2B (5'-ATGTAGGTG-3') in the HOXB3 enhancer and promotes HOXB3 transcriptional activation. Binds to specific DNA sites located in the promoter region of HOXA4, HOXB2 and ERBB2. Regulates hindbrain segmentation by controlling the expression of Hox genes, such as HOXA4, HOXB3 and HOXB2, and thereby specifying odd and even rhombomeres. Promotes the expression of HOXB3 in the rhombomere r5 in the hindbrain. Regulates myelination in the peripheral nervous system after birth, possibly by regulating the expression of myelin proteins, such as MPZ, and by promoting the differentiation of Schwann cells. Involved in the development of the jaw openener musculature, probably by playing a role in its innervation through trigeminal motor neurons. May play a role in adipogenesis, possibly by regulating the expression of CEBPB. Its function is as follows. E3 SUMO-protein ligase helping SUMO1 conjugation to its coregulators NAB1 and NAB2, whose sumoylation down-regulates EGR2 transcriptional activity. This Rattus norvegicus (Rat) protein is E3 SUMO-protein ligase EGR2 (Egr2).